A 780-amino-acid polypeptide reads, in one-letter code: RNA-binding protein Pasilla (780 aa).

3 disordered regions span residues 31–50 (LQHQ…QQLE), 76–113 (QPRH…SSSI), and 150–190 (QIES…ATAS). Low complexity-rich tracts occupy residues 79-91 (HSTT…STHS), 99-113 (SSNS…SSSI), and 176-190 (PNGT…ATAS). KH domains follow at residues 273 to 340 (TYHM…MEFI), 366 to 432 (DKQV…CKMI), and 691 to 758 (KDSK…QYLI). A disordered region spans residues 674 to 693 (AQLGGLSKSPTPGDLSSKDS). Positions 686 to 776 (GDLSSKDSKN…TKRARQIPLT (91 aa)) are required for RNA binding.

In terms of tissue distribution, expressed in the central nervous system in mushroom body neurons (at protein level).

Its subcellular location is the nucleus. It localises to the cytoplasm. Functionally, functions to regulate alternative splicing in neurons by binding pre-mRNA in a sequence-specific manner to activate exon inclusion. Plays a role in long-term memory formation by processing the unspliced Orb2-isoform A (Orb2A) mRNA and thereby controlling Orb2A protein abundance. This chain is RNA-binding protein Pasilla, found in Drosophila melanogaster (Fruit fly).